The following is a 136-amino-acid chain: Translation initiation factor 5A (136 aa).

Lys-36 carries the hypusine modification.

Belongs to the eIF-5A family.

Its subcellular location is the cytoplasm. In terms of biological role, functions by promoting the formation of the first peptide bond. This chain is Translation initiation factor 5A (eIF5A), found in Hyperthermus butylicus (strain DSM 5456 / JCM 9403 / PLM1-5).